The chain runs to 215 residues: 3-demethoxyubiquinol 3-hydroxylase (215 aa).

The Fe cation site is built by E64, E94, H97, E146, E178, and H181.

This sequence belongs to the COQ7 family. Fe cation is required as a cofactor.

It localises to the cell membrane. It catalyses the reaction a 5-methoxy-2-methyl-3-(all-trans-polyprenyl)benzene-1,4-diol + AH2 + O2 = a 3-demethylubiquinol + A + H2O. It participates in cofactor biosynthesis; ubiquinone biosynthesis. Catalyzes the hydroxylation of 2-nonaprenyl-3-methyl-6-methoxy-1,4-benzoquinol during ubiquinone biosynthesis. The chain is 3-demethoxyubiquinol 3-hydroxylase from Pseudomonas savastanoi pv. phaseolicola (strain 1448A / Race 6) (Pseudomonas syringae pv. phaseolicola (strain 1448A / Race 6)).